A 132-amino-acid polypeptide reads, in one-letter code: Transcription antitermination protein NusB (132 aa).

This sequence belongs to the NusB family.

Functionally, involved in transcription antitermination. Required for transcription of ribosomal RNA (rRNA) genes. Binds specifically to the boxA antiterminator sequence of the ribosomal RNA (rrn) operons. The sequence is that of Transcription antitermination protein NusB from Campylobacter lari (strain RM2100 / D67 / ATCC BAA-1060).